Here is a 249-residue protein sequence, read N- to C-terminus: Flavodoxin/ferredoxin--NADP reductase (249 aa).

The region spanning 2 to 102 is the FAD-binding FR-type domain; it reads NTWITAKIIK…KKSYGFFTLN (101 aa). Residues 51–54, Tyr-67, 75–77, and Thr-117 contribute to the FAD site; these read RAYS and QLT. Residues 144–145, 174–175, Arg-185, and 215–217 each bind NADP(+); these read VR, SR, and NPD. Residue 248-249 coordinates FAD; it reads YW.

Belongs to the ferredoxin--NADP reductase type 1 family. The cofactor is FAD.

The protein resides in the cytoplasm. It catalyses the reaction 2 reduced [2Fe-2S]-[ferredoxin] + NADP(+) + H(+) = 2 oxidized [2Fe-2S]-[ferredoxin] + NADPH. The catalysed reaction is reduced [flavodoxin] + NADP(+) = oxidized [flavodoxin] + NADPH + 2 H(+). In terms of biological role, transports electrons between flavodoxin or ferredoxin and NADPH. In Buchnera aphidicola subsp. Baizongia pistaciae (strain Bp), this protein is Flavodoxin/ferredoxin--NADP reductase (fpr).